The primary structure comprises 366 residues: Phospho-N-acetylmuramoyl-pentapeptide-transferase (366 aa).

Helical transmembrane passes span 3–23, 52–72, 80–100, 120–140, 161–181, 197–217, 238–258, 262–282, 287–307, and 341–361; these read QIII…PVLI, MGGI…GIVG, LTAS…LGFA, LIGQ…FPNA, LAIG…YILI, LAAG…FWQF, LAIL…WNAA, IFMG…LSVA, LLMI…VIQV, and FWLI…GEWL.

The protein belongs to the glycosyltransferase 4 family. MraY subfamily. Mg(2+) is required as a cofactor.

Its subcellular location is the cell membrane. It catalyses the reaction UDP-N-acetyl-alpha-D-muramoyl-L-alanyl-gamma-D-glutamyl-meso-2,6-diaminopimeloyl-D-alanyl-D-alanine + di-trans,octa-cis-undecaprenyl phosphate = di-trans,octa-cis-undecaprenyl diphospho-N-acetyl-alpha-D-muramoyl-L-alanyl-D-glutamyl-meso-2,6-diaminopimeloyl-D-alanyl-D-alanine + UMP. It functions in the pathway cell wall biogenesis; peptidoglycan biosynthesis. Functionally, catalyzes the initial step of the lipid cycle reactions in the biosynthesis of the cell wall peptidoglycan: transfers peptidoglycan precursor phospho-MurNAc-pentapeptide from UDP-MurNAc-pentapeptide onto the lipid carrier undecaprenyl phosphate, yielding undecaprenyl-pyrophosphoryl-MurNAc-pentapeptide, known as lipid I. This is Phospho-N-acetylmuramoyl-pentapeptide-transferase from Corynebacterium diphtheriae (strain ATCC 700971 / NCTC 13129 / Biotype gravis).